Reading from the N-terminus, the 197-residue chain is Imidazoleglycerol-phosphate dehydratase (197 aa).

It belongs to the imidazoleglycerol-phosphate dehydratase family.

It localises to the cytoplasm. It carries out the reaction D-erythro-1-(imidazol-4-yl)glycerol 3-phosphate = 3-(imidazol-4-yl)-2-oxopropyl phosphate + H2O. It functions in the pathway amino-acid biosynthesis; L-histidine biosynthesis; L-histidine from 5-phospho-alpha-D-ribose 1-diphosphate: step 6/9. This is Imidazoleglycerol-phosphate dehydratase from Syntrophomonas wolfei subsp. wolfei (strain DSM 2245B / Goettingen).